The following is a 257-amino-acid chain: Probable dihydroorotate dehydrogenase B (NAD(+)), electron transfer subunit (257 aa).

The 88-residue stretch at 2–89 (EKPVICRIKE…RGPYGTYFEP (88 aa)) folds into the FAD-binding FR-type domain. Residues cysteine 208, cysteine 213, cysteine 216, and cysteine 226 each contribute to the [2Fe-2S] cluster site.

This sequence belongs to the PyrK family. As to quaternary structure, heterotetramer of 2 PyrK and 2 PyrD type B subunits. It depends on [2Fe-2S] cluster as a cofactor. The cofactor is FAD.

Its pathway is pyrimidine metabolism; UMP biosynthesis via de novo pathway; orotate from (S)-dihydroorotate (NAD(+) route): step 1/1. Its function is as follows. Responsible for channeling the electrons from the oxidation of dihydroorotate from the FMN redox center in the PyrD type B subunit to the ultimate electron acceptor NAD(+). This chain is Probable dihydroorotate dehydrogenase B (NAD(+)), electron transfer subunit, found in Methanocaldococcus jannaschii (strain ATCC 43067 / DSM 2661 / JAL-1 / JCM 10045 / NBRC 100440) (Methanococcus jannaschii).